The sequence spans 240 residues: Uridylate kinase (240 aa).

13-16 (KLSG) is a binding site for ATP. The interval 21–26 (GDKGFG) is involved in allosteric activation by GTP. Gly55 is a UMP binding site. Positions 56 and 60 each coordinate ATP. UMP contacts are provided by residues Asp75 and 136-143 (IGNPYFST). ATP-binding residues include Asn164, Tyr170, and Asp173.

The protein belongs to the UMP kinase family. In terms of assembly, homohexamer.

It is found in the cytoplasm. The catalysed reaction is UMP + ATP = UDP + ADP. It functions in the pathway pyrimidine metabolism; CTP biosynthesis via de novo pathway; UDP from UMP (UMPK route): step 1/1. Its activity is regulated as follows. Allosterically activated by GTP. Inhibited by UTP. In terms of biological role, catalyzes the reversible phosphorylation of UMP to UDP. This is Uridylate kinase from Staphylococcus epidermidis (strain ATCC 35984 / DSM 28319 / BCRC 17069 / CCUG 31568 / BM 3577 / RP62A).